Here is a 473-residue protein sequence, read N- to C-terminus: Membrane protein TMS1 (473 aa).

Topologically, residues 1-6 (MGAVIS) are cytoplasmic. The chain crosses the membrane as a helical span at residues 7-29 (LPVSMAGSFVASCFGGCCSNLVT). Topologically, residues 30–38 (KTASSLGSS) are vacuolar. A helical transmembrane segment spans residues 39 to 61 (SLGTRLLYAVWLLLNSLISWVSY). The Cytoplasmic segment spans residues 62-81 (SANKSILWPGKTCTGTGECG). A helical membrane pass occupies residues 82-104 (FFTVHRLNFALGCLHLILALVLT). The Vacuolar portion of the chain corresponds to 105–118 (GVKSTNDVRAALQN). Residues 119 to 138 (SWWSLKFILYLCLIVLSFVI) form a helical membrane-spanning segment. Residues 139-144 (PNDFYI) are Cytoplasmic-facing. The helical transmembrane segment at 145-167 (FFSKWVSVPSGAIFILVGLILLV) threads the bilayer. The Vacuolar segment spans residues 168 to 194 (DFAHEWAETCISHVESEDEDSSFWQRF). Residues 195–217 (LVLGTTSMYTASIIMTVVMYVMF) form a helical membrane-spanning segment. Over 218–228 (CHQQCNMNQTA) the chain is Cytoplasmic. Residues 229-246 (VTVNLILTVITLVLSVNP) form a helical membrane-spanning segment. Residues 247–295 (KIQEANPKSGLAQSSMVSVYCTYLTMSAMSSEPDDKMCNPLVRSSGTRK) are Vacuolar-facing. The chain crosses the membrane as a helical span at residues 296–318 (FSIILGSLFTFIAIAYTTTRAAA). The Cytoplasmic segment spans residues 319–398 (NSAFQGTNTN…DDERTGTKYN (80 aa)). The chain crosses the membrane as a helical span at residues 399–421 (YTLFHVIFFLATQWIAILLTINV). The Vacuolar segment spans residues 422–435 (TQDDVGDFIPVGRT). The chain crosses the membrane as a helical span at residues 436 to 458 (YFYSWVKIVSAWICYALYGWTVV). Over 459–473 (APAIMPDRFDYENYY) the chain is Cytoplasmic.

This sequence belongs to the TDE1 family.

The protein localises to the membrane. In Saccharomyces cerevisiae (strain ATCC 204508 / S288c) (Baker's yeast), this protein is Membrane protein TMS1 (TMS1).